A 364-amino-acid polypeptide reads, in one-letter code: Anhydro-N-acetylmuramic acid kinase (364 aa).

11–18 (GSSLDGID) provides a ligand contact to ATP.

It belongs to the anhydro-N-acetylmuramic acid kinase family.

The enzyme catalyses 1,6-anhydro-N-acetyl-beta-muramate + ATP + H2O = N-acetyl-D-muramate 6-phosphate + ADP + H(+). It participates in amino-sugar metabolism; 1,6-anhydro-N-acetylmuramate degradation. It functions in the pathway cell wall biogenesis; peptidoglycan recycling. Functionally, catalyzes the specific phosphorylation of 1,6-anhydro-N-acetylmuramic acid (anhMurNAc) with the simultaneous cleavage of the 1,6-anhydro ring, generating MurNAc-6-P. Is required for the utilization of anhMurNAc either imported from the medium or derived from its own cell wall murein, and thus plays a role in cell wall recycling. The polypeptide is Anhydro-N-acetylmuramic acid kinase (Pseudomonas syringae pv. syringae (strain B728a)).